A 253-amino-acid polypeptide reads, in one-letter code: CENP-A recruiting complex protein mis20 (253 aa).

The interval 113–136 (TGPTTSKNKHPSHSNTIRSPPYKV) is disordered.

Component of the CENP-A recruiting complex composed of at least mis16, mis19, mis19 and mis20.

The protein resides in the cytoplasm. It localises to the cytoskeleton. Its subcellular location is the microtubule organizing center. The protein localises to the spindle pole body. It is found in the chromosome. The protein resides in the centromere. In terms of biological role, component of the CENP-A recruiting complex that ensures the integrity of mitotic spindles through maintenance of kinetochore factors mis6/CENP-I and cnp1/CENP-A. Seems dispensable for proper chromosome segregation. The polypeptide is CENP-A recruiting complex protein mis20 (Schizosaccharomyces pombe (strain 972 / ATCC 24843) (Fission yeast)).